A 103-amino-acid polypeptide reads, in one-letter code: Large ribosomal subunit protein bL21 (103 aa).

Belongs to the bacterial ribosomal protein bL21 family. In terms of assembly, part of the 50S ribosomal subunit. Contacts protein L20.

Its function is as follows. This protein binds to 23S rRNA in the presence of protein L20. This chain is Large ribosomal subunit protein bL21, found in Pectobacterium carotovorum subsp. carotovorum (strain PC1).